Here is a 499-residue protein sequence, read N- to C-terminus: Glycerol kinase (499 aa).

Thr12 lines the ADP pocket. ATP-binding residues include Thr12, Thr13, and Ser14. Thr12 serves as a coordination point for sn-glycerol 3-phosphate. ADP is bound at residue Arg16. Sn-glycerol 3-phosphate-binding residues include Arg82, Glu83, Tyr135, and Asp245. Arg82, Glu83, Tyr135, Asp245, and Gln246 together coordinate glycerol. Residues Thr267 and Gly310 each contribute to the ADP site. Positions 267, 310, 314, and 411 each coordinate ATP. 2 residues coordinate ADP: Gly411 and Asn415.

It belongs to the FGGY kinase family. As to quaternary structure, homotetramer and homodimer (in equilibrium).

It catalyses the reaction glycerol + ATP = sn-glycerol 3-phosphate + ADP + H(+). It participates in polyol metabolism; glycerol degradation via glycerol kinase pathway; sn-glycerol 3-phosphate from glycerol: step 1/1. Its activity is regulated as follows. Activated by phosphorylation and inhibited by fructose 1,6-bisphosphate (FBP). Functionally, key enzyme in the regulation of glycerol uptake and metabolism. Catalyzes the phosphorylation of glycerol to yield sn-glycerol 3-phosphate. This is Glycerol kinase from Clostridium beijerinckii (strain ATCC 51743 / NCIMB 8052) (Clostridium acetobutylicum).